A 271-amino-acid chain; its full sequence is Ferric enterobactin transport ATP-binding protein FepC (271 aa).

The region spanning 8–244 (LRGEQLTLGY…ELIERIYGLR (237 aa)) is the ABC transporter domain. 40-47 (GPNGCGKS) contributes to the ATP binding site.

Belongs to the ABC transporter superfamily. The complex is composed of two ATP-binding proteins (FepC), two transmembrane proteins (FepD and FepG) and a solute-binding protein (FepB).

Its subcellular location is the cell inner membrane. It catalyses the reaction Fe(III)-enterobactin(out) + ATP + H2O = Fe(III)-enterobactin(in) + ADP + phosphate + H(+). Functionally, part of the ABC transporter complex FepBDGC involved in ferric enterobactin uptake. Responsible for energy coupling to the transport system. This chain is Ferric enterobactin transport ATP-binding protein FepC (fepC), found in Escherichia coli (strain K12).